A 347-amino-acid chain; its full sequence is MIKEYYGAETFILNKDFAYILVIGTTDVSLIPGLTIAGATPELTHFTPAADAEYVLLGKCKSINTIPVSPTGIPTPALLTRASLSFINPLKIVVNAGSRILPKIPYIDLQGEPGKDIRKQALSMEKVNNIMENSIKLGEELSNEYELIMIGESIPAGTTTAMATLLALGYDAMDKVSSASPDNPKELKRKVVEEALRNLPTDSLQRLAKVSDPVLLGVAGTSLGFKGKILLAGGTQMTAAAAIINEFDKNKLKDITIGTTKWIVEDKFADMLSLAKQVGVKVLASMLDLSISAYEGIRAYEKGYVKEGVGAGGSAIMALVRGVSNNTLVRKIDELYSELVGSNNLHI.

Belongs to the UPF0284 family.

This chain is UPF0284 protein YN1551_0030, found in Saccharolobus islandicus (strain Y.N.15.51 / Yellowstone #2) (Sulfolobus islandicus).